We begin with the raw amino-acid sequence, 94 residues long: Acylphosphatase (94 aa).

The region spanning 8-94 (RFTARVVGRV…QGDLADFRRK (87 aa)) is the Acylphosphatase-like domain. Catalysis depends on residues R23 and N41.

The protein belongs to the acylphosphatase family.

It carries out the reaction an acyl phosphate + H2O = a carboxylate + phosphate + H(+). The polypeptide is Acylphosphatase (acyP) (Frankia alni (strain DSM 45986 / CECT 9034 / ACN14a)).